Reading from the N-terminus, the 344-residue chain is L-rhamnose-proton symporter (344 aa).

Transmembrane regions (helical) follow at residues 4-24, 38-58, 68-88, 101-121, 137-157, 175-195, 214-234, 259-279, 290-310, and 323-343; these read AITM…CFYA, WSVG…ALLL, FSLS…IGNI, MGIG…TPII, TLLG…AGQL, LVLA…MNAA, LPSY…FCFI, VLLS…YAWG, ISWM…GLVL, and VLSL…IGMA.

This sequence belongs to the L-rhamnose transporter (TC 2.A.7.6) family.

Its subcellular location is the cell inner membrane. It carries out the reaction L-rhamnopyranose(in) + H(+)(in) = L-rhamnopyranose(out) + H(+)(out). Its function is as follows. Uptake of L-rhamnose across the cytoplasmic membrane with the concomitant transport of protons into the cell (symport system). The protein is L-rhamnose-proton symporter of Escherichia coli O1:K1 / APEC.